We begin with the raw amino-acid sequence, 55 residues long: UPF0291 protein CA_C2726 (55 aa).

It belongs to the UPF0291 family.

It localises to the cytoplasm. The sequence is that of UPF0291 protein CA_C2726 from Clostridium acetobutylicum (strain ATCC 824 / DSM 792 / JCM 1419 / IAM 19013 / LMG 5710 / NBRC 13948 / NRRL B-527 / VKM B-1787 / 2291 / W).